Reading from the N-terminus, the 303-residue chain is UDP-3-O-acyl-N-acetylglucosamine deacetylase (303 aa).

Positions 78, 237, and 241 each coordinate Zn(2+). The active-site Proton donor is histidine 264.

Belongs to the LpxC family. Requires Zn(2+) as cofactor.

The catalysed reaction is a UDP-3-O-[(3R)-3-hydroxyacyl]-N-acetyl-alpha-D-glucosamine + H2O = a UDP-3-O-[(3R)-3-hydroxyacyl]-alpha-D-glucosamine + acetate. Its pathway is glycolipid biosynthesis; lipid IV(A) biosynthesis; lipid IV(A) from (3R)-3-hydroxytetradecanoyl-[acyl-carrier-protein] and UDP-N-acetyl-alpha-D-glucosamine: step 2/6. Its function is as follows. Catalyzes the hydrolysis of UDP-3-O-myristoyl-N-acetylglucosamine to form UDP-3-O-myristoylglucosamine and acetate, the committed step in lipid A biosynthesis. This Pseudomonas fluorescens (strain ATCC BAA-477 / NRRL B-23932 / Pf-5) protein is UDP-3-O-acyl-N-acetylglucosamine deacetylase.